The chain runs to 256 residues: Protein US2 homolog (256 aa).

Disordered stretches follow at residues 100 to 120, 167 to 186, and 236 to 256; these read TRRP…SPPP, STAA…RRRP, and VRRR…CTIS. Residues 167–180 show a composition bias toward low complexity; the sequence is STAAGAPGAPTGAR. Residues 245 to 256 show a composition bias toward basic and acidic residues; sequence NGRERAPRCTIS.

Belongs to the herpesviridae US2 family.

In Sus scrofa (Pig), this protein is Protein US2 homolog (28K).